The primary structure comprises 529 residues: BAR/IMD domain-containing adapter protein 2-like 2 (529 aa).

The IMD domain occupies 1–239; that stretch reads MAPEMDQFYR…HSPGLLGPAL (239 aa). Disordered stretches follow at residues 221-327 and 403-510; these read EASR…GGAR and TSMS…TNPF. A phosphoserine mark is found at Ser-231, Ser-272, and Ser-302. Residues 299-313 show a composition bias toward low complexity; sequence SASSLYSGSAQSSRS. One can recognise an SH3 domain in the interval 324-387; sequence GGARRVRALV…PEAYVKALEE (64 aa). Composition is skewed to low complexity over residues 403–413 and 452–462; these read TSMSPMTPMNP and RSRTPSRVPSR. A compositionally biased stretch (pro residues) spans 463-472; that stretch reads APSPAPPPLP. A phosphoserine mark is found at Ser-478 and Ser-481.

Expressed in the epithelial layer of the intestine (at protein level).

The protein localises to the cell membrane. It localises to the cell junction. Its subcellular location is the cytoplasmic vesicle membrane. Phosphoinositides-binding protein that induces the formation of planar or gently curved membrane structures. Binds to phosphoinositides, including to phosphatidylinositol 4,5-bisphosphate (PtdIns(4,5)P2) headgroups. There seems to be no clear preference for a specific phosphoinositide. In Homo sapiens (Human), this protein is BAR/IMD domain-containing adapter protein 2-like 2 (BAIAP2L2).